The following is a 555-amino-acid chain: Glutamine--tRNA ligase (555 aa).

The 'HIGH' region motif lies at proline 34 to histidine 44. ATP-binding positions include glutamate 35–asparagine 37 and histidine 41–serine 47. Aspartate 67 and tyrosine 212 together coordinate L-glutamine. Residues threonine 231, arginine 261–leucine 262, and methionine 269–lysine 271 contribute to the ATP site. Positions isoleucine 268–arginine 272 match the 'KMSKS' region motif.

It belongs to the class-I aminoacyl-tRNA synthetase family. In terms of assembly, monomer.

Its subcellular location is the cytoplasm. It catalyses the reaction tRNA(Gln) + L-glutamine + ATP = L-glutaminyl-tRNA(Gln) + AMP + diphosphate. This chain is Glutamine--tRNA ligase, found in Yersinia enterocolitica serotype O:8 / biotype 1B (strain NCTC 13174 / 8081).